Reading from the N-terminus, the 123-residue chain is Small ribosomal subunit protein uS12 (123 aa).

D89 bears the 3-methylthioaspartic acid mark.

It belongs to the universal ribosomal protein uS12 family. As to quaternary structure, part of the 30S ribosomal subunit. Contacts proteins S8 and S17. May interact with IF1 in the 30S initiation complex.

In terms of biological role, with S4 and S5 plays an important role in translational accuracy. Its function is as follows. Interacts with and stabilizes bases of the 16S rRNA that are involved in tRNA selection in the A site and with the mRNA backbone. Located at the interface of the 30S and 50S subunits, it traverses the body of the 30S subunit contacting proteins on the other side and probably holding the rRNA structure together. The combined cluster of proteins S8, S12 and S17 appears to hold together the shoulder and platform of the 30S subunit. In Nitrobacter hamburgensis (strain DSM 10229 / NCIMB 13809 / X14), this protein is Small ribosomal subunit protein uS12.